The chain runs to 25 residues: Spinigerin (25 aa).

Its subcellular location is the secreted. In terms of biological role, active against Gram-positive bacteria B.megaterium and M.luteus, Gram-negative bacteria E.coli SBS363 and D22, K.pneumoniae, S.typhimurium and P.aeruginosa, yeast C.albicans and filamentous fungi F.culmorum, N.crassa, N.hematococca and T.viridae. Inactive against Gram-positive bacteria B.subtilis, S.pyogenes, B.thuringiensis and S.aureus, Gram-negative bacteria E.cloacae and E.carotovora and filamentous fungus B.bassiana. In Pseudacanthotermes spiniger, this protein is Spinigerin.